We begin with the raw amino-acid sequence, 433 residues long: Glutamate-1-semialdehyde 2,1-aminomutase (433 aa).

Residue K269 is modified to N6-(pyridoxal phosphate)lysine.

This sequence belongs to the class-III pyridoxal-phosphate-dependent aminotransferase family. HemL subfamily. In terms of assembly, homodimer. Requires pyridoxal 5'-phosphate as cofactor.

The protein resides in the cytoplasm. It carries out the reaction (S)-4-amino-5-oxopentanoate = 5-aminolevulinate. The protein operates within porphyrin-containing compound metabolism; protoporphyrin-IX biosynthesis; 5-aminolevulinate from L-glutamyl-tRNA(Glu): step 2/2. This Renibacterium salmoninarum (strain ATCC 33209 / DSM 20767 / JCM 11484 / NBRC 15589 / NCIMB 2235) protein is Glutamate-1-semialdehyde 2,1-aminomutase.